A 572-amino-acid polypeptide reads, in one-letter code: Methionine--tRNA ligase (572 aa).

The 'HIGH' region signature appears at 11-21 (PYINGIKHLGN). Zn(2+) is bound by residues Cys143, Cys146, Cys156, and Cys159. A 'KMSKS' region motif is present at residues 346–350 (QFSTS). Thr349 contributes to the ATP binding site.

Belongs to the class-I aminoacyl-tRNA synthetase family. MetG type 1 subfamily. As to quaternary structure, monomer. It depends on Zn(2+) as a cofactor.

The protein resides in the cytoplasm. It catalyses the reaction tRNA(Met) + L-methionine + ATP = L-methionyl-tRNA(Met) + AMP + diphosphate. Functionally, is required not only for elongation of protein synthesis but also for the initiation of all mRNA translation through initiator tRNA(fMet) aminoacylation. The chain is Methionine--tRNA ligase from Ruegeria pomeroyi (strain ATCC 700808 / DSM 15171 / DSS-3) (Silicibacter pomeroyi).